Consider the following 331-residue polypeptide: Ribosomal RNA small subunit methyltransferase C (331 aa).

It belongs to the methyltransferase superfamily. RsmC family. Monomer.

It is found in the cytoplasm. It catalyses the reaction guanosine(1207) in 16S rRNA + S-adenosyl-L-methionine = N(2)-methylguanosine(1207) in 16S rRNA + S-adenosyl-L-homocysteine + H(+). Specifically methylates the guanine in position 1207 of 16S rRNA in the 30S particle. The chain is Ribosomal RNA small subunit methyltransferase C from Pseudomonas putida (strain W619).